Here is a 133-residue protein sequence, read N- to C-terminus: Binder of sperm protein homolog 1 (133 aa).

The signal sequence occupies residues Met-1–Ser-20. Fibronectin type-II domains follow at residues Thr-40 to Leu-84 and Ser-85 to Glu-133. Disulfide bonds link Cys-45/Cys-69, Cys-59/Cys-82, Cys-90/Cys-116, and Cys-104/Cys-131. N-linked (GlcNAc...) asparagine glycosylation occurs at Asn-72.

Belongs to the seminal plasma protein family. Expressed only in the epididymis.

It localises to the secreted. Functionally, binds sperm in vitro and promotes sperm capacitation. Specifically promotes capacitation induced by high density lipoproteins (HDLs). Also binds heparin, phospholipid liposomes, and weakly to gelatin. Does not bind chondroitin sulfate B. This Mus musculus (Mouse) protein is Binder of sperm protein homolog 1 (Bsph1).